A 706-amino-acid polypeptide reads, in one-letter code: Solute carrier organic anion transporter family member 6C1 (706 aa).

Residues 1–24 (MAHVRNKKSDDKKAMVVAKEDTNK) form a disordered region. Topologically, residues 1–94 (MAHVRNKKSD…PFVQRFNNID (94 aa)) are cytoplasmic. Positions 7–24 (KKSDDKKAMVVAKEDTNK) are enriched in basic and acidic residues. The chain crosses the membrane as a helical span at residues 95-118 (GFMTLYVAAVLIHGALFAVVDMTL). The Extracellular segment spans residues 119–130 (NIYQVQFSLTRT). Residues 131 to 151 (EWYLMDFSDYIASFVVAIIIA) form a helical membrane-spanning segment. The Cytoplasmic segment spans residues 152-159 (HFGSKGNR). Residues 160–180 (TRWIAASCILMGLESMLFAFP) traverse the membrane as a helical segment. The Extracellular segment spans residues 181 to 218 (FFTYEIIIPGRQSIELCMEENEKRNIICGNSVPNRSKC). Asn-214 carries N-linked (GlcNAc...) asparagine glycosylation. The helical transmembrane segment at 219–241 (IYFHIAGQCIHGIAGMPIYILGI) threads the bilayer. Topologically, residues 242 to 253 (TFIFDHIPTSSC) are cytoplasmic. The helical transmembrane segment at 254 to 277 (GFYLAIGHSAYLIGYLLGMVGGLQ) threads the bilayer. Residues 278 to 301 (NFQPPPKEKTVEIEPAKVYQLLQS) are Extracellular-facing. The chain crosses the membrane as a helical span at residues 302-324 (GWWKTFLIIAAISFCVSFMMVCF). Topologically, residues 325–374 (PTSLPGAHKLRLAKRKEPPTIDRRLKDMKIQPHLKGFLHNIWHILKNPLM) are cytoplasmic. Residues 375-396 (LTQAICKVSEYLTFNTSLYFLP) form a helical membrane-spanning segment. Topologically, residues 397-410 (HHLQTQFLITPGIA) are extracellular. A helical membrane pass occupies residues 411 to 432 (SLLTGAFVLPGGIIGHFLGGLI). At 433–445 (VDRLEMTNKNKLK) the chain is on the cytoplasmic side. Residues 446 to 466 (FTLVTTVVSVGLFLLIFFVEC) traverse the membrane as a helical segment. Residues 467–565 (QTTTFAGINE…IAGTCDSDCL (99 aa)) lie on the Extracellular side of the membrane. Residues 485-540 (GNLTADCNEYCDCTTSLYTSICGRDEKEYFSPCFAGCKATKVSQTEKTYYNCSCIK) enclose the Kazal-like domain. A glycan (N-linked (GlcNAc...) asparagine) is linked at Asn-486. Intrachain disulfides connect Cys-491–Cys-521, Cys-497–Cys-517, and Cys-506–Cys-538. An N-linked (GlcNAc...) asparagine glycan is attached at Asn-535. Residues 566 to 589 (KLPLFFAFYFSATVFSNMCSIPVI) form a helical membrane-spanning segment. Residues 590–604 (SIILQSVPANFTSLS) are Cytoplasmic-facing. A helical membrane pass occupies residues 605 to 624 (LGVTYAIVKFVASVPAPLLF). Residues 625-652 (RLSSAIACIYWDNNRCGGKERCWIYNKN) lie on the Extracellular side of the membrane. Residues 653–675 (ILVYEFMGIWMSSQLIIVLLNIY) traverse the membrane as a helical segment. The Cytoplasmic segment spans residues 676–706 (AIQIHDVVVHGEITESKTTVKDVKEQKERKA).

This sequence belongs to the organo anion transporter (TC 2.A.60) family. In terms of assembly, component of the CatSper complex or CatSpermasome composed of the core pore-forming members CATSPER1, CATSPER2, CATSPER3 and CATSPER4 as well as auxiliary members CATSPERB, CATSPERG2, CATSPERD, CATSPERE, CATSPERZ, C2CD6/CATSPERT, SLCO6C1, TMEM249, TMEM262 and EFCAB9. HSPA1 may be an additional auxiliary complex member. The core complex members CATSPER1, CATSPER2, CATSPER3 and CATSPER4 form a heterotetrameric channel. The auxiliary CATSPERB, CATSPERG2, CATSPERD and CATSPERE subunits form a pavilion-like structure over the pore which stabilizes the complex through interactions with CATSPER4, CATSPER3, CATSPER1 and CATSPER2 respectively. SLCO6C1 interacts with CATSPERE and TMEM262/CATSPERH interacts with CATSPERB, further stabilizing the complex. C2CD6/CATSPERT interacts at least with CATSPERD and is required for targeting the CatSper complex in the flagellar membrane.

Its subcellular location is the cell projection. The protein resides in the cilium. It localises to the flagellum membrane. Auxiliary component of the CatSper complex, a complex involved in sperm cell hyperactivation. This Mus musculus (Mouse) protein is Solute carrier organic anion transporter family member 6C1.